Here is a 105-residue protein sequence, read N- to C-terminus: U1-sicaritoxin-Li1b (105 aa).

The signal sequence occupies residues methionine 1–alanine 19. The propeptide occupies glutamate 20–arginine 36. Cystine bridges form between cysteine 38–cysteine 55, cysteine 46–cysteine 60, cysteine 54–cysteine 73, and cysteine 62–cysteine 71. Position 82 is an arginine amide (arginine 82). Positions alanine 86 to glutamate 105 are excised as a propeptide.

It belongs to the neurotoxin 28 (Litx) family. As to expression, expressed by the venom gland.

The protein localises to the secreted. Its function is as follows. Toxin active against insects (S.frugiperda larvae). May act on sodium (Nav) or calcium (Cav) channels. The chain is U1-sicaritoxin-Li1b from Loxosceles intermedia (Brown spider).